Consider the following 206-residue polypeptide: Uridine kinase (206 aa).

Residue 9-16 (GGSGSGKT) participates in ATP binding.

This sequence belongs to the uridine kinase family.

The protein localises to the cytoplasm. It catalyses the reaction uridine + ATP = UMP + ADP + H(+). The enzyme catalyses cytidine + ATP = CMP + ADP + H(+). The protein operates within pyrimidine metabolism; CTP biosynthesis via salvage pathway; CTP from cytidine: step 1/3. It participates in pyrimidine metabolism; UMP biosynthesis via salvage pathway; UMP from uridine: step 1/1. This chain is Uridine kinase, found in Borrelia hermsii (strain HS1 / DAH).